A 185-amino-acid polypeptide reads, in one-letter code: dCTP deaminase (185 aa).

DCTP is bound by residues K107 to R112, T131 to E133, Q152, Y166, and Q176. E133 acts as the Proton donor/acceptor in catalysis.

The protein belongs to the dCTP deaminase family. In terms of assembly, homotrimer.

It carries out the reaction dCTP + H2O + H(+) = dUTP + NH4(+). It functions in the pathway pyrimidine metabolism; dUMP biosynthesis; dUMP from dCTP (dUTP route): step 1/2. Its function is as follows. Catalyzes the deamination of dCTP to dUTP. The protein is dCTP deaminase of Anaplasma phagocytophilum (strain HZ).